Consider the following 347-residue polypeptide: DnaJ homolog subfamily C member 22 (347 aa).

The region spanning 4–50 (GLLMTYTLWAVGGPAGLHHLYLGRDSHALLWMLTLGGGGLGWLWEFW) is the TM2 domain. Transmembrane regions (helical) follow at residues 5–25 (LLMT…HLYL), 32–52 (LLWM…FWML), 81–101 (FVAQ…SLSF), 105–125 (FYIV…AAVG), 135–155 (LGAA…ILPI), 186–206 (GLAY…HTAV), and 218–238 (FLSW…VLLL). Positions 277–347 (LALQVFGLSE…GSWRWEETSF (71 aa)) constitute a J domain.

The protein resides in the membrane. Functionally, may function as a co-chaperone. The polypeptide is DnaJ homolog subfamily C member 22 (DNAJC22) (Bos taurus (Bovine)).